Here is a 363-residue protein sequence, read N- to C-terminus: Ribonuclease P protein subunit p40 (363 aa).

As to quaternary structure, component of nuclear RNase P and RNase MRP ribonucleoproteins. RNase P consists of a catalytic RNA moiety and about 10 protein subunits; POP1, POP4, POP5, POP7, RPP14, RPP21, RPP25, RPP30, RPP38 and RPP40. Within the RNase P complex, POP1, POP7 and RPP25 form the 'finger' subcomplex, POP5, RPP14, RPP40 and homodimeric RPP30 form the 'palm' subcomplex, and RPP21, POP4 and RPP38 form the 'wrist' subcomplex. All subunits of the RNase P complex interact with the catalytic RNA. Several subunits of RNase P are also part of the RNase MRP complex. RNase MRP consists of a catalytic RNA moiety and about 8 protein subunits; POP1, POP7, RPP25, RPP30, RPP38, RPP40 and possibly also POP4 and POP5.

Its subcellular location is the nucleus. The protein localises to the nucleolus. Functionally, component of ribonuclease P, a ribonucleoprotein complex that generates mature tRNA molecules by cleaving their 5'-ends. Also a component of the MRP ribonuclease complex, which cleaves pre-rRNA sequences. This Homo sapiens (Human) protein is Ribonuclease P protein subunit p40 (RPP40).